A 92-amino-acid chain; its full sequence is Small ribosomal subunit protein uS19c (92 aa).

This sequence belongs to the universal ribosomal protein uS19 family.

It is found in the plastid. The protein resides in the chloroplast. Protein S19 forms a complex with S13 that binds strongly to the 16S ribosomal RNA. This is Small ribosomal subunit protein uS19c from Draba nemorosa (Woodland whitlowgrass).